Consider the following 744-residue polypeptide: Prestin (744 aa).

Over 1–79 the chain is Cytoplasmic; it reads MDHAEENEIP…WLPAYKFKEY (79 aa). The helical transmembrane segment at 80 to 105 threads the bilayer; that stretch reads VLGDLVSGISTGVLQLPQGLAFAMLA. Topologically, residues 106 to 109 are extracellular; that stretch reads AVPP. The chain crosses the membrane as a helical span at residues 110 to 125; that stretch reads VFGLYSSFYPVIMYCF. Residues 126–137 are Cytoplasmic-facing; sequence FGTSRHISIGPF. A helical membrane pass occupies residues 138 to 147; it reads AVISLMIGGV. At 148-178 the chain is on the extracellular side; it reads AVRLVPDDIVIPGGVNATNGTEARDALRVKV. The short motif at 158-168 is the Involved in motor function element; the sequence is IPGGVNATNGT. N-linked (GlcNAc...) asparagine glycosylation is found at Asn163 and Asn166. A helical transmembrane segment spans residues 179–196; the sequence is AMSVTLLSGIIQFCLGVC. At 197 to 208 the chain is on the cytoplasmic side; it reads RFGFVAIYLTEP. The helical transmembrane segment at 209–230 threads the bilayer; that stretch reads LVRGFTTAAAVHVFTSMLKYLF. The Extracellular portion of the chain corresponds to 231–243; the sequence is GVKTKRYSGIFSV. The helical intramembrane region spans 244–252; sequence VYSTVAVLQ. The Extracellular segment spans residues 253-258; it reads NVKNLN. The helical transmembrane segment at 259–282 threads the bilayer; the sequence is VCSLGVGLMVFGLLLGGKEFNERF. Topologically, residues 283–291 are cytoplasmic; the sequence is KEKLPAPIP. The helical transmembrane segment at 292 to 304 threads the bilayer; that stretch reads LEFFAVVMGTGIS. The Extracellular segment spans residues 305 to 337; sequence AGFNLHESYSVDVVGTLPLGLLPPANPDTSLFH. The chain crosses the membrane as a helical span at residues 338–361; sequence LVYVDAIAIAIVGFSVTISMAKTL. The Cytoplasmic portion of the chain corresponds to 362 to 370; sequence ANKHGYQVD. A helical membrane pass occupies residues 371–388; sequence GNQELIALGICNSIGSLF. Residues 389-396 lie on the Extracellular side of the membrane; sequence QTFSISCS. A helical membrane pass occupies residues 397-406; it reads LSRSLVQEGT. Salicylate is bound at residue Ser398. At 407–410 the chain is on the cytoplasmic side; that stretch reads GGKT. The helical transmembrane segment at 411 to 429 threads the bilayer; sequence QLAGCLASLMILLVILATG. Residues 430–436 are Extracellular-facing; that stretch reads FLFESLP. The chain crosses the membrane as a helical span at residues 437–455; the sequence is QAVLSAIVIVNLKGMFMQF. Over 456–469 the chain is Cytoplasmic; that stretch reads SDLPFFWRTSKIEL. A helical transmembrane segment spans residues 470-484; that stretch reads TIWLTTFVSSLFLGL. Residue Asp485 is a topological domain, extracellular. A helical transmembrane segment spans residues 486-497; that stretch reads YGLITAVIIALL. Topologically, residues 498 to 744 are cytoplasmic; the sequence is TVIYRTQSPS…PNATPTTPEA (247 aa). The extended region for STAS domain stretch occupies residues 505–718; sequence SPSYKVLGQL…AVLGSHVREA (214 aa). In terms of domain architecture, STAS spans 525 to 713; it reads AYEEVKEIPG…HSIHDAVLGS (189 aa). Residues 717–744 form a disordered region; it reads EAMAEQEASAPPPQDDMEPNATPTTPEA.

It belongs to the SLC26A/SulP transporter (TC 2.A.53) family. In terms of assembly, homodimer. Interacts (via STAS domain) with CALM; this interaction is calcium-dependent and the STAS domain interacts with only one lobe of CALM which is an elongated conformation. Interacts with MYH1. In terms of tissue distribution, highly expressed in mature outer hair cells, but not in inner hair cells or other cells of the basilar membrane and the organ of Corti.

The protein resides in the lateral cell membrane. It catalyses the reaction 2 hydrogencarbonate(in) + chloride(out) = 2 hydrogencarbonate(out) + chloride(in). In terms of biological role, voltage-sensitive motor protein that drives outer hair cell (OHC) electromotility (eM) and participates in sound amplification in the hearing organ. Converts changes in the transmembrane electric potential into mechanical displacements resulting in the coupling of its expansion to movement of a charged voltage sensor across the lipid membrane. The nature of the voltage sensor is not completely clear, and two models compete. In the first model, acts as an incomplete transporter where intracellular chloride anion acts as extrinsic voltage sensor that drives conformational change in the protein which is sufficient to produce a length change in the plane of the membrane and hence in the length of the OHC. The second model in which multiple charged amino acid residues are distributed at the intracellular and extracellular membrane interfaces that form an intrinsic voltage sensor, whose movement produces the non-linear capacitance (NLC). However, the effective voltage sensor may be the result of a hybrid voltage sensor assembled from intrinsic charge (charged residues) and extrinsic charge (bound anion). Notably, binding of anions to the anion-binding pocket partially neutralizes the intrinsic positive charge rather than to form an electrically negative sensor, therefore remaining charge may serve as voltage sensor that, after depolarization, moves from down (expanded state) to up (contracted) conformation, which is accompanied by an eccentric contraction of the intermembrane cross-sectional area of the protein as well as a major increase in the hydrophobic thickness of the protein having as consequences the plasma membrane thickening and the cell contraction after membrane depolarization. The anion-binding pocket transits from the inward-open (Down) state, where it is exposed toward the intracellular solvent in the absence of anion, to the occluded (Up) state upon anion binding. Salicylate competes for the anion-binding site and inhibits the voltage-sensor movement, and therefore inhibits the charge transfer and electromotility by displacing Cl(-) from the anion-binding site and by preventing the structural transitions to the contracted state. In addition, can act as a weak Cl(-)/HCO3 (-) antiporter across the cell membrane and so regulate the intracellular pH of the outer hair cells (OHCs), while firstly found as being unable to mediate electrogenic anion transport. Moreover, supports a role in cardiac mechanical amplification serving as an elastic element to enhance the actomyosin- based sarcomere contraction system. In Meriones unguiculatus (Mongolian jird), this protein is Prestin.